The following is a 402-amino-acid chain: Imidazolonepropionase (402 aa).

Fe(3+) contacts are provided by H66 and H68. Positions 66 and 68 each coordinate Zn(2+). 4-imidazolone-5-propanoate contacts are provided by R75, Y138, and H171. Y138 serves as a coordination point for N-formimidoyl-L-glutamate. H236 is a binding site for Fe(3+). H236 contributes to the Zn(2+) binding site. Q239 serves as a coordination point for 4-imidazolone-5-propanoate. D311 contributes to the Fe(3+) binding site. D311 contributes to the Zn(2+) binding site. N-formimidoyl-L-glutamate-binding residues include N313 and G315. T316 provides a ligand contact to 4-imidazolone-5-propanoate.

Belongs to the metallo-dependent hydrolases superfamily. HutI family. Zn(2+) serves as cofactor. It depends on Fe(3+) as a cofactor.

It is found in the cytoplasm. It carries out the reaction 4-imidazolone-5-propanoate + H2O = N-formimidoyl-L-glutamate. Its pathway is amino-acid degradation; L-histidine degradation into L-glutamate; N-formimidoyl-L-glutamate from L-histidine: step 3/3. Catalyzes the hydrolytic cleavage of the carbon-nitrogen bond in imidazolone-5-propanoate to yield N-formimidoyl-L-glutamate. It is the third step in the universal histidine degradation pathway. The protein is Imidazolonepropionase of Vibrio cholerae serotype O1 (strain ATCC 39541 / Classical Ogawa 395 / O395).